A 152-amino-acid polypeptide reads, in one-letter code: Small ribosomal subunit protein uS13 (152 aa).

Belongs to the universal ribosomal protein uS13 family.

It is found in the cytoplasm. Functionally, located at the top of the head of the 40S subunit, it contacts several helices of the 18S rRNA. This Branchiostoma belcheri (Amphioxus) protein is Small ribosomal subunit protein uS13 (RPS18).